A 229-amino-acid chain; its full sequence is MKLSFHGQSTIYLEGNNKKVIVDPFISNNPKCDLNIETVQVDYIVLTHGHFDHFGDVVELAKKTGATVIGSAEMADYLSSYHGVENVHGMNIGGKANFDFGSVKFVQAFHSSSFTHENGIPVYLGMPMGIVFEVEGKTIYHTGDTGLFSDMSLIAKRHPVDVCFVPIGDNFTMGIDDASYAINEFIKPKISVPIHYDTFPLIEQDPQQFKDAVNVGDVQILKPGESVQF.

The protein belongs to the UPF0173 family.

The sequence is that of UPF0173 metal-dependent hydrolase SAOUHSC_01815 from Staphylococcus aureus (strain NCTC 8325 / PS 47).